A 244-amino-acid chain; its full sequence is Fumarate reductase iron-sulfur subunit (244 aa).

Tyr-14 contacts a menaquinone. A 2Fe-2S ferredoxin-type domain is found at 16 to 97; the sequence is PEVDTAPHSA…GMKVEALANF (82 aa). [2Fe-2S] cluster-binding residues include Cys-58, Cys-63, Cys-66, and Cys-78. The region spanning 140–169 is the 4Fe-4S ferredoxin-type domain; sequence MAKYHQFSGCINCGLCYAACPQFGLNPEFI. [4Fe-4S] cluster is bound by residues Cys-149, Cys-152, and Cys-155. Positions 159, 205, and 211 each coordinate [3Fe-4S] cluster. A [4Fe-4S] cluster-binding site is contributed by Cys-215. 226 to 229 contacts a menaquinone; that stretch reads QQGK.

It belongs to the succinate dehydrogenase/fumarate reductase iron-sulfur protein family. Fumarate dehydrogenase forms part of an enzyme complex containing four subunits: a flavoprotein, an iron-sulfur, and two hydrophobic anchor proteins. The cofactor is [2Fe-2S] cluster. [3Fe-4S] cluster is required as a cofactor. Requires [4Fe-4S] cluster as cofactor.

It localises to the cell inner membrane. The enzyme catalyses a quinone + succinate = fumarate + a quinol. It carries out the reaction a menaquinone + succinate = a menaquinol + fumarate. In terms of biological role, two distinct, membrane-bound, FAD-containing enzymes are responsible for the catalysis of fumarate and succinate interconversion; the fumarate reductase is used in anaerobic growth, and the succinate dehydrogenase is used in aerobic growth. This is Fumarate reductase iron-sulfur subunit (frdB) from Escherichia coli O157:H7.